The primary structure comprises 484 residues: UDP-N-acetylmuramate--L-alanine ligase (484 aa).

123-129 serves as a coordination point for ATP; that stretch reads GTHGKTT.

Belongs to the MurCDEF family.

It localises to the cytoplasm. The catalysed reaction is UDP-N-acetyl-alpha-D-muramate + L-alanine + ATP = UDP-N-acetyl-alpha-D-muramoyl-L-alanine + ADP + phosphate + H(+). It participates in cell wall biogenesis; peptidoglycan biosynthesis. In terms of biological role, cell wall formation. In Pseudomonas fluorescens (strain ATCC BAA-477 / NRRL B-23932 / Pf-5), this protein is UDP-N-acetylmuramate--L-alanine ligase.